The following is a 343-amino-acid chain: Protein RecA (343 aa).

Residue 66 to 73 (GPESSGKT) coordinates ATP.

This sequence belongs to the RecA family.

The protein resides in the cytoplasm. Functionally, can catalyze the hydrolysis of ATP in the presence of single-stranded DNA, the ATP-dependent uptake of single-stranded DNA by duplex DNA, and the ATP-dependent hybridization of homologous single-stranded DNAs. It interacts with LexA causing its activation and leading to its autocatalytic cleavage. This chain is Protein RecA, found in Dechloromonas aromatica (strain RCB).